Consider the following 133-residue polypeptide: Small ribosomal subunit protein bS16 (133 aa).

Positions 99–133 are disordered; the sequence is EKWQQNQTERRQKRLAVKTRRRQAKKAAEAKGAEA. Residues 109–123 are compositionally biased toward basic residues; the sequence is RQKRLAVKTRRRQAK. A compositionally biased stretch (basic and acidic residues) spans 124–133; it reads KAAEAKGAEA.

The protein belongs to the bacterial ribosomal protein bS16 family.

The protein is Small ribosomal subunit protein bS16 of Chlorobium limicola (strain DSM 245 / NBRC 103803 / 6330).